Here is a 190-residue protein sequence, read N- to C-terminus: Threonylcarbamoyl-AMP synthase (190 aa).

The YrdC-like domain maps to 7–190 (SEAVAHAVAV…ALTGELFRQG (184 aa)).

It belongs to the SUA5 family. TsaC subfamily.

The protein localises to the cytoplasm. The catalysed reaction is L-threonine + hydrogencarbonate + ATP = L-threonylcarbamoyladenylate + diphosphate + H2O. In terms of biological role, required for the formation of a threonylcarbamoyl group on adenosine at position 37 (t(6)A37) in tRNAs that read codons beginning with adenine. Catalyzes the conversion of L-threonine, HCO(3)(-)/CO(2) and ATP to give threonylcarbamoyl-AMP (TC-AMP) as the acyladenylate intermediate, with the release of diphosphate. In Klebsiella pneumoniae subsp. pneumoniae (strain ATCC 700721 / MGH 78578), this protein is Threonylcarbamoyl-AMP synthase.